Consider the following 764-residue polypeptide: Nucleolar transcription factor 1 (764 aa).

The residue at position 1 (M1) is an N-acetylmethionine. The segment at 1–21 is disordered; sequence MNGEADCPTDLEMAAPKGQDR. 2 DNA-binding regions (HMG box) span residues 112–180 and 196–264; these read PKKP…ARFR and PEKP…RDYI. T201 carries the phosphothreonine modification. Phosphoserine occurs at positions 273, 336, and 364. Positions 298-362 form a DNA-binding region, HMG box 3; sequence TKPPPNSYSL…DYEVELLRFL (65 aa). A compositionally biased stretch (basic and acidic residues) spans 370–379; sequence QQRVLGEEKM. Residues 370 to 411 are disordered; it reads QQRVLGEEKMLNINKKQTTSPASKKPSQEGGKGGSEKPKRPV. 9 positions are modified to phosphoserine: S389, S412, S433, S435, S484, S495, S546, S584, and S638. 3 consecutive DNA-binding regions (HMG box) follow at residues 407-475, 482-549, and 568-634; these read PKRP…GGER, PESP…SEMR, and KKPP…DLWV. The interval 456-488 is disordered; it reads YKAREAALKAQSERKPGGEREDRGKLPESPKRA. Over residues 457 to 488 the composition is skewed to basic and acidic residues; sequence KAREAALKAQSERKPGGEREDRGKLPESPKRA. Residues 546–576 are disordered; that stretch reads SEMRAPPAATNSSKKMKFQGEPKKPPMNGYQ. A disordered region spans residues 648-764; that stretch reads YISNKRKNMT…SGDSSDSDSN (117 aa). Residues 664–674 show a composition bias toward polar residues; the sequence is PKSSRTTLQSK. Acidic residues predominate over residues 677–745; sequence SEEDDDEEDD…DDDEDEDNES (69 aa). Positions 746-758 are enriched in low complexity; sequence EGSSSSSSSSGDS.

In terms of assembly, homodimer. Part of Pol I pre-initiation complex (PIC), in which Pol I core assembles with RRN3 and promoter-bound UTBF and SL1/TIF-IB complex. Interacts with TOP2A in the context of Pol I complex. Interacts with TBP. Interacts with TAF1A. Interacts with PHF6. Interacts with CEBPA (isoform 1 and isoform 4). Interacts with DDX11. Interacts with NOP53. Interacts with RASL11A. Interacts with DHX33. Binds to IRS1 and PIK3CA. Interacts with ALKBH2. In terms of processing, phosphorylated and activated by PIK3CA.

Its subcellular location is the nucleus. It is found in the nucleolus. In terms of biological role, recognizes the ribosomal RNA gene promoter and activates transcription mediated by RNA polymerase I through cooperative interactions with the transcription factor SL1/TIF-IB complex. It binds specifically to the upstream control element. This chain is Nucleolar transcription factor 1 (Ubtf), found in Rattus norvegicus (Rat).